A 106-amino-acid polypeptide reads, in one-letter code: SH3 domain-binding glutamic acid-rich-like protein 2-B (106 aa).

An SH3-binding motif is present at residues 61-67; sequence QGNPLPP.

The protein belongs to the SH3BGR family.

The protein resides in the nucleus. This chain is SH3 domain-binding glutamic acid-rich-like protein 2-B (sh3bgrl2-b), found in Xenopus laevis (African clawed frog).